We begin with the raw amino-acid sequence, 599 residues long: Beta-(1--&gt;2)glucan export ATP-binding/permease protein NdvA (599 aa).

Residues 21 to 301 (TITMCVASVL…ISAFINQTVT (281 aa)) form the ABC transmembrane type-1 domain. Helical transmembrane passes span 22-42 (ITMC…PVLF), 55-75 (IFSP…AAVF), 156-176 (MRMS…GQLV), 248-268 (MAST…VTKG), and 276-296 (IAFI…SAFI). In terms of domain architecture, ABC transporter spans 335–569 (IVFDNVTFEF…GGRFSDLLRA (235 aa)). 368-375 (GPTGAGKT) provides a ligand contact to ATP.

Belongs to the ABC transporter superfamily. Beta-(1--&gt;2)glucan exporter (TC 3.A.1.108.1) family. In terms of assembly, homodimer.

It localises to the cell inner membrane. The catalysed reaction is [(1-&gt;2)-beta-D-glucosyl](n)(in) + ATP + H2O = [(1-&gt;2)-beta-D-glucosyl](n)(out) + ADP + phosphate + H(+). Functionally, involved in beta-(1--&gt;2)glucan export. Transmembrane domains (TMD) form a pore in the inner membrane and the ATP-binding domain (NBD) is responsible for energy generation. This is Beta-(1--&gt;2)glucan export ATP-binding/permease protein NdvA from Brucella suis biovar 1 (strain 1330).